We begin with the raw amino-acid sequence, 231 residues long: Protein RhiA (231 aa).

In terms of biological role, may be involved in plant-microbe interaction. This chain is Protein RhiA (rhiA), found in Rhizobium leguminosarum bv. viciae.